We begin with the raw amino-acid sequence, 418 residues long: Tryptophan synthase beta chain (418 aa).

Residues 1–18 (MTSTLPNASTPDPASLQP) are compositionally biased toward polar residues. The segment at 1–23 (MTSTLPNASTPDPASLQPSVRPG) is disordered. Residue K111 is modified to N6-(pyridoxal phosphate)lysine.

The protein belongs to the TrpB family. As to quaternary structure, tetramer of two alpha and two beta chains. It depends on pyridoxal 5'-phosphate as a cofactor.

The enzyme catalyses (1S,2R)-1-C-(indol-3-yl)glycerol 3-phosphate + L-serine = D-glyceraldehyde 3-phosphate + L-tryptophan + H2O. The protein operates within amino-acid biosynthesis; L-tryptophan biosynthesis; L-tryptophan from chorismate: step 5/5. In terms of biological role, the beta subunit is responsible for the synthesis of L-tryptophan from indole and L-serine. In Parasynechococcus marenigrum (strain WH8102), this protein is Tryptophan synthase beta chain.